We begin with the raw amino-acid sequence, 213 residues long: Holliday junction branch migration complex subunit RuvA (213 aa).

A domain I region spans residues 1 to 64 (MIASVTGEVA…DEAPLLFGFA (64 aa)). The domain II stretch occupies residues 65–143 (QGDEKEIFTV…LPEPPVQQAN (79 aa)). The tract at residues 144–152 (QPQVPVWRD) is flexible linker. The tract at residues 152-213 (DQVVDALTGL…GTTHAPTGRR (62 aa)) is domain III.

Belongs to the RuvA family. In terms of assembly, homotetramer. Forms an RuvA(8)-RuvB(12)-Holliday junction (HJ) complex. HJ DNA is sandwiched between 2 RuvA tetramers; dsDNA enters through RuvA and exits via RuvB. An RuvB hexamer assembles on each DNA strand where it exits the tetramer. Each RuvB hexamer is contacted by two RuvA subunits (via domain III) on 2 adjacent RuvB subunits; this complex drives branch migration. In the full resolvosome a probable DNA-RuvA(4)-RuvB(12)-RuvC(2) complex forms which resolves the HJ.

The protein resides in the cytoplasm. Its function is as follows. The RuvA-RuvB-RuvC complex processes Holliday junction (HJ) DNA during genetic recombination and DNA repair, while the RuvA-RuvB complex plays an important role in the rescue of blocked DNA replication forks via replication fork reversal (RFR). RuvA specifically binds to HJ cruciform DNA, conferring on it an open structure. The RuvB hexamer acts as an ATP-dependent pump, pulling dsDNA into and through the RuvAB complex. HJ branch migration allows RuvC to scan DNA until it finds its consensus sequence, where it cleaves and resolves the cruciform DNA. This Kocuria rhizophila (strain ATCC 9341 / DSM 348 / NBRC 103217 / DC2201) protein is Holliday junction branch migration complex subunit RuvA.